A 389-amino-acid chain; its full sequence is Putative nickel insertion protein (389 aa).

This sequence belongs to the LarC family.

The chain is Putative nickel insertion protein from Desulfotalea psychrophila (strain LSv54 / DSM 12343).